The chain runs to 465 residues: MDNHSSVPWASAASVTCLSLDAKCHSSSSKSAASSISASPETQTMRHIAHTQRCLSRLTSLVALLLIVLPMMFSPAHSCGPGRGLGRHRARNLYPLVLKQTIPNLSEYTNSASGPLEGVIRRDSPKFKDLVPNYNRDILFRDEEGTGADRLMSKRCKEKLNVLAYSVMNEWPGIRLLVTESWDEDYHHGQESLHYEGRAVTIATSDRDQSKYGMLARLAVEAGFDWVSYVSRRHIYCSVKSDSSISSHVHGCFTPESTALLESGVRKPLGELSIGDRVLSMTANGQAVYSEVILFMDRNLEQMQNFVQLHTDGGAVLTVTPAHLVSVWQPESQKLTFVFADRIEEKNQVLVRDVETGELRPQRVVKVGSVRSKGVVAPLTREGTIVVNSVAASCYAVINSQSLAHWGLAPMRLLSTLEAWLPAKEQLHSSPKVVSSAQQQNGIHWYANALYKVKDYVLPQSWRHD.

A lipid anchor (N-palmitoyl cysteine) is attached at Cys79. Ca(2+) is bound by residues Glu143, Glu144, Asp149, Thr179, Glu180, Asp183, and Asp185. The Cholesterol glycine ester moiety is linked to residue Gly251.

This sequence belongs to the hedgehog family. In terms of assembly, interacts with shf. Post-translationally, the C-terminal part of the hedgehog protein precursor displays an autoproteolysis activity that results in the cleavage of the full-length protein into two parts (N-product and C-product). In addition, the C-terminal part displays a cholesterol transferase activity that results by the covalent attachment of a cholesterol moiety to the C-terminal of the newly generated N-product. The N-product is the active species in both local and long-range signaling, whereas the C-product has no signaling activity. In terms of processing, cholesterylation is required for N-product targeting to lipid rafts and multimerization. N-palmitoylation by Rasp of the hedgehog N-product, within the secretory pathway, is required for the embryonic and larval patterning activities of the hedgehog signal.

It is found in the nucleus. The protein resides in the cytoplasm. Its subcellular location is the cell membrane. The catalysed reaction is glycyl-L-cysteinyl-[protein] + cholesterol + H(+) = [protein]-C-terminal glycyl cholesterol ester + N-terminal L-cysteinyl-[protein]. The C-terminal part of the hedgehog protein precursor displays an autoproteolysis activity that results in the cleavage of the full-length protein into two parts (N-product and C-product). In addition, the C-terminal part displays a cholesterol transferase activity that results by the covalent attachment of a cholesterol moiety to the C-terminal of the newly generated N-product. Once cleaved, the C-product has no signaling activity and diffuses from the cell. Its function is as follows. The dually lipidated hedgehog protein N-product is a morphogen which is essential for a variety of patterning events during development. Establishes the anterior-posterior axis of the embryonic segments and patterns the larval imaginal disks. Binds to the patched (ptc) receptor, which functions in association with smoothened (smo), to activate the transcription of target genes wingless (wg), decapentaplegic (dpp) and ptc. In the absence of hh, ptc represses the constitutive signaling activity of smo through fused (fu). Essential component of a signaling pathway which regulates the Duox-dependent gut immune response to bacterial uracil; required to activate Cad99C-dependent endosome formation, norpA-dependent Ca2+ mobilization and p38 MAPK, which are essential steps in the Duox-dependent production of reactive oxygen species (ROS) in response to intestinal bacterial infection. During photoreceptor differentiation, it up-regulates transcription of Ubr3, which in turn promotes the hh-signaling pathway by mediating the ubiquitination and degradation of cos. This chain is Protein hedgehog, found in Drosophila sechellia (Fruit fly).